The following is an 81-amino-acid chain: MAHSVKIYDTCIGCTQCVRACPTDVLEMVPWNGCRAKQIASAPRTEDCVGCKRCESACPTDYLSVRVYLRQETTRSMGLAY.

2 4Fe-4S ferredoxin-type domains span residues 1–31 and 39–68; these read MAHSVKIYDTCIGCTQCVRACPTDVLEMVPW and IASAPRTEDCVGCKRCESACPTDYLSVRVY. Residues Cys11, Cys14, Cys17, Cys21, Cys48, Cys51, Cys54, and Cys58 each coordinate [4Fe-4S] cluster.

The eukaryotic PSI reaction center is composed of at least 11 subunits. [4Fe-4S] cluster serves as cofactor.

It is found in the plastid. Its subcellular location is the chloroplast thylakoid membrane. It carries out the reaction reduced [plastocyanin] + hnu + oxidized [2Fe-2S]-[ferredoxin] = oxidized [plastocyanin] + reduced [2Fe-2S]-[ferredoxin]. In terms of biological role, apoprotein for the two 4Fe-4S centers FA and FB of photosystem I (PSI); essential for photochemical activity. FB is the terminal electron acceptor of PSI, donating electrons to ferredoxin. The C-terminus interacts with PsaA/B/D and helps assemble the protein into the PSI complex. Required for binding of PsaD and PsaE to PSI. PSI is a plastocyanin-ferredoxin oxidoreductase, converting photonic excitation into a charge separation, which transfers an electron from the donor P700 chlorophyll pair to the spectroscopically characterized acceptors A0, A1, FX, FA and FB in turn. This is Photosystem I iron-sulfur center from Welwitschia mirabilis (Tree tumbo).